The following is a 493-amino-acid chain: Ketol-acid reductoisomerase (NADP(+)) (493 aa).

One can recognise a KARI N-terminal Rossmann domain in the interval 14–208; the sequence is LDQLGRCRFM…GGHRAGVLES (195 aa). NADP(+) is bound by residues 45–48, Arg68, Arg76, Ser78, and 108–110; these read CGAQ and DKQ. The active site involves His132. Residue Gly158 participates in NADP(+) binding. 2 consecutive KARI C-terminal knotted domains span residues 209–345 and 346–486; these read SFVA…APKG and ENIK…MTDM. Mg(2+) is bound by residues Asp217, Glu221, Glu390, and Glu394. A substrate-binding site is contributed by Ser415.

This sequence belongs to the ketol-acid reductoisomerase family. Mg(2+) serves as cofactor.

The catalysed reaction is (2R)-2,3-dihydroxy-3-methylbutanoate + NADP(+) = (2S)-2-acetolactate + NADPH + H(+). It carries out the reaction (2R,3R)-2,3-dihydroxy-3-methylpentanoate + NADP(+) = (S)-2-ethyl-2-hydroxy-3-oxobutanoate + NADPH + H(+). The protein operates within amino-acid biosynthesis; L-isoleucine biosynthesis; L-isoleucine from 2-oxobutanoate: step 2/4. It participates in amino-acid biosynthesis; L-valine biosynthesis; L-valine from pyruvate: step 2/4. Its function is as follows. Involved in the biosynthesis of branched-chain amino acids (BCAA). Catalyzes an alkyl-migration followed by a ketol-acid reduction of (S)-2-acetolactate (S2AL) to yield (R)-2,3-dihydroxy-isovalerate. In the isomerase reaction, S2AL is rearranged via a Mg-dependent methyl migration to produce 3-hydroxy-3-methyl-2-ketobutyrate (HMKB). In the reductase reaction, this 2-ketoacid undergoes a metal-dependent reduction by NADPH to yield (R)-2,3-dihydroxy-isovalerate. In Histophilus somni (strain 2336) (Haemophilus somnus), this protein is Ketol-acid reductoisomerase (NADP(+)).